The following is a 92-amino-acid chain: PqqA binding protein (92 aa).

It belongs to the PqqD family. In terms of assembly, monomer. Interacts with PqqE.

Its pathway is cofactor biosynthesis; pyrroloquinoline quinone biosynthesis. Functions as a PqqA binding protein and presents PqqA to PqqE, in the pyrroloquinoline quinone (PQQ) biosynthetic pathway. This Xanthomonas oryzae pv. oryzae (strain MAFF 311018) protein is PqqA binding protein.